A 517-amino-acid chain; its full sequence is Crotonobetaine/carnitine--CoA ligase (517 aa).

This sequence belongs to the ATP-dependent AMP-binding enzyme family.

The catalysed reaction is 4-(trimethylamino)butanoate + ATP + CoA = 4-(trimethylamino)butanoyl-CoA + AMP + diphosphate. It catalyses the reaction crotonobetaine + ATP + CoA = crotonobetainyl-CoA + AMP + diphosphate. It carries out the reaction (R)-carnitine + ATP + CoA = (R)-carnitinyl-CoA + AMP + diphosphate. The protein operates within amine and polyamine metabolism; carnitine metabolism. Catalyzes the transfer of CoA to carnitine, generating the initial carnitinyl-CoA needed for the CaiB reaction cycle. Also has activity toward crotonobetaine and gamma-butyrobetaine. In Shigella sonnei (strain Ss046), this protein is Crotonobetaine/carnitine--CoA ligase.